Reading from the N-terminus, the 83-residue chain is Small ribosomal subunit protein uS17 (83 aa).

This sequence belongs to the universal ribosomal protein uS17 family. As to quaternary structure, part of the 30S ribosomal subunit.

In terms of biological role, one of the primary rRNA binding proteins, it binds specifically to the 5'-end of 16S ribosomal RNA. The polypeptide is Small ribosomal subunit protein uS17 (Chlamydia trachomatis serovar L2 (strain ATCC VR-902B / DSM 19102 / 434/Bu)).